The following is a 274-amino-acid chain: Putative phosphoenolpyruvate synthase regulatory protein (274 aa).

155-162 (GVSRSGKT) is an ADP binding site.

This sequence belongs to the pyruvate, phosphate/water dikinase regulatory protein family. PSRP subfamily.

The enzyme catalyses [pyruvate, water dikinase] + ADP = [pyruvate, water dikinase]-phosphate + AMP + H(+). It carries out the reaction [pyruvate, water dikinase]-phosphate + phosphate + H(+) = [pyruvate, water dikinase] + diphosphate. Bifunctional serine/threonine kinase and phosphorylase involved in the regulation of the phosphoenolpyruvate synthase (PEPS) by catalyzing its phosphorylation/dephosphorylation. The chain is Putative phosphoenolpyruvate synthase regulatory protein from Laribacter hongkongensis (strain HLHK9).